The primary structure comprises 263 residues: HTH-type transcriptional regulator KdgR (263 aa).

Residues 13–74 (VSSVLKVFGI…GESEKYSLTL (62 aa)) enclose the HTH iclR-type domain. Positions 34–53 (ITELSQRVMMSKSTVYRFLQ) form a DNA-binding region, H-T-H motif. Positions 89–258 (LIRSADIQMR…ARKISAQMGY (170 aa)) constitute an IclR-ED domain.

It is found in the cytoplasm. Its function is as follows. Transcriptional repressor that negatively regulates the expression of kdgT, kdgK and kdgA, which encode proteins involved in transport and catabolism of 2-keto-3-deoxygluconate (KDG). Also represses expression of eda, which encodes the Entner-Doudoroff aldolase, by binding to its P2 promoter region. The chain is HTH-type transcriptional regulator KdgR from Escherichia coli (strain K12).